The following is a 426-amino-acid chain: Hemojuvelin (426 aa).

The N-terminal stretch at 1-35 (MGEPGQSPSPRSSHGSPPTLSTLTLLLLLCGHAHS) is a signal peptide. The residue at position 46 (Y46) is a Phosphotyrosine. N118 carries an N-linked (GlcNAc...) asparagine glycan. A disordered region spans residues 119-142 (CSRQGPTAPPPPRGPALPGAGSGL). 2 disulfide bridges follow: C148/C230 and C167/C317. N-linked (GlcNAc...) asparagine glycans are attached at residues N213 and N372. The GPI-anchor amidated aspartate moiety is linked to residue D400. The propeptide at 401–426 (AGVPLSSATLLAPLLSGLFVLWLCIQ) is removed in mature form.

It belongs to the repulsive guidance molecule (RGM) family. In terms of assembly, interacts with BMP2 and BMP4. Interacts with BMP6. Interacts with BMPR1B. Interacts with TMPRSS6. In terms of processing, autocatalytically cleaved at low pH; the two chains remain linked via two disulfide bonds. Also proteolytically processed by TMPRSS6, several fragments being released in the extracellular space; regulates HJV activity in BMP signaling and thefore iron homeostasis. In terms of tissue distribution, adult and fetal liver, heart, and skeletal muscle.

Its subcellular location is the cell membrane. Its function is as follows. Acts as a bone morphogenetic protein (BMP) coreceptor. Through enhancement of BMP signaling regulates hepcidin (HAMP) expression and regulates iron homeostasis. This chain is Hemojuvelin, found in Homo sapiens (Human).